A 218-amino-acid chain; its full sequence is Glycerol-3-phosphate acyltransferase (218 aa).

5 helical membrane passes run 4-24, 54-74, 80-100, 107-127, and 130-150; these read IALG…AILI, TAAI…WLAY, PFYL…PIFF, GVAT…GLMM, and WLLT…SALI.

It belongs to the PlsY family. In terms of assembly, probably interacts with PlsX.

It localises to the cell inner membrane. It carries out the reaction an acyl phosphate + sn-glycerol 3-phosphate = a 1-acyl-sn-glycero-3-phosphate + phosphate. The protein operates within lipid metabolism; phospholipid metabolism. Its function is as follows. Catalyzes the transfer of an acyl group from acyl-phosphate (acyl-PO(4)) to glycerol-3-phosphate (G3P) to form lysophosphatidic acid (LPA). This enzyme utilizes acyl-phosphate as fatty acyl donor, but not acyl-CoA or acyl-ACP. The polypeptide is Glycerol-3-phosphate acyltransferase (Photorhabdus laumondii subsp. laumondii (strain DSM 15139 / CIP 105565 / TT01) (Photorhabdus luminescens subsp. laumondii)).